Reading from the N-terminus, the 248-residue chain is DNA repair protein RecO (248 aa).

This sequence belongs to the RecO family.

Its function is as follows. Involved in DNA repair and RecF pathway recombination. The polypeptide is DNA repair protein RecO (Streptomyces griseus subsp. griseus (strain JCM 4626 / CBS 651.72 / NBRC 13350 / KCC S-0626 / ISP 5235)).